The primary structure comprises 410 residues: Dipeptidase 1 (410 aa).

Residues 1–16 (MWTSWWLWPLVAVCTA) form the signal peptide. Zn(2+)-binding residues include histidine 36 and aspartate 38. A glycan (N-linked (GlcNAc...) asparagine) is linked at asparagine 57. Cysteines 87 and 170 form a disulfide. Glutamate 141 provides a ligand contact to Zn(2+). Residue histidine 168 participates in substrate binding. Positions 214 and 235 each coordinate Zn(2+). Cysteine 242 and cysteine 274 form a disulfide bridge. Residues arginine 246 and aspartate 304 each contribute to the substrate site. Serine 384 carries GPI-anchor amidated serine lipidation. Residues 385 to 410 (EAPSLHRRPGALLASLSLLLLSLGLL) constitute a propeptide, removed in mature form.

Belongs to the metallo-dependent hydrolases superfamily. Peptidase M19 family. Homodimer; disulfide-linked. Requires Zn(2+) as cofactor.

It localises to the apical cell membrane. The protein localises to the cell projection. It is found in the microvillus membrane. It catalyses the reaction an L-aminoacyl-L-amino acid + H2O = 2 an L-alpha-amino acid. It carries out the reaction leukotriene D4 + H2O = leukotriene E4 + glycine. The enzyme catalyses L-cystine-bis-glycine + 2 H2O = L-cystine + 2 glycine. The catalysed reaction is a beta-lactam + H2O = a substituted beta-amino acid. It catalyses the reaction glycyldehydrophenylalanine + H2O = 2,3-didehydrophenylalanine + glycine. With respect to regulation, inhibited by L-penicillamine. Beta-lactamase activity is inhibited by cilastatin. In terms of biological role, hydrolyzes a wide range of dipeptides including the conversion of leukotriene D4 to leukotriene E4. Hydrolyzes cystinyl-bis-glycine (cys-bis-gly) formed during glutathione degradation. Also possesses beta lactamase activity and hydrolytically inactivates beta-lactam antibiotics. Functionally, independently of its dipeptidase activity, acts as an adhesion receptor for neutrophil recruitment from bloodstream into inflamed lungs and liver. The sequence is that of Dipeptidase 1 (DPEP1) from Oryctolagus cuniculus (Rabbit).